Here is a 166-residue protein sequence, read N- to C-terminus: Myosin regulatory light chain 2, ventricular/cardiac muscle isoform (166 aa).

Ser2 is modified (n,N,N-trimethylserine). A phosphoserine mark is found at Ser14, Ser15, and Ser19. EF-hand domains follow at residues 24-59, 94-129, and 130-165; these read TQIQ…LGRV, DPEE…QAER, and FSKE…GEEK. Residues Asp37, Asn39, Asp41, and Asp48 each coordinate Ca(2+). Thr52 carries the post-translational modification Phosphothreonine.

Myosin is a hexamer of 2 heavy chains and 4 light chains. Interacts with MYOC. Post-translationally, N-terminus is methylated by METTL11A/NTM1. In terms of processing, phosphorylated by MYLK3 and MYLK2; promotes cardiac muscle contraction and function. Dephosphorylated by PPP1CB complexed to PPP1R12B. The phosphorylated form in adult is expressed as gradients across the heart from endocardium (low phosphorylation) to epicardium (high phosphorylation); regulates cardiac torsion and workload distribution. In terms of tissue distribution, abundantly expressed in both cardiac and slow skeletal muscle (soleus), with no detectable expression in fast skeletal muscle (vastus lateralis) or non-muscle tissue.

Its subcellular location is the cytoplasm. The protein resides in the myofibril. The protein localises to the sarcomere. It is found in the a band. Its function is as follows. Contractile protein that plays a role in heart development and function. Following phosphorylation, plays a role in cross-bridge cycling kinetics and cardiac muscle contraction by increasing myosin lever arm stiffness and promoting myosin head diffusion; as a consequence of the increase in maximum contraction force and calcium sensitivity of contraction force. These events altogether slow down myosin kinetics and prolong duty cycle resulting in accumulated myosins being cooperatively recruited to actin binding sites to sustain thin filament activation as a means to fine-tune myofilament calcium sensitivity to force. During cardiogenesis plays an early role in cardiac contractility by promoting cardiac myofibril assembly. In Rattus norvegicus (Rat), this protein is Myosin regulatory light chain 2, ventricular/cardiac muscle isoform.